Here is a 381-residue protein sequence, read N- to C-terminus: Pre-mRNA-splicing factor cwf28 (381 aa).

The tract at residues 1 to 21 (MKRKAVLEAFSDSEDEDEKKL) is disordered. Phosphoserine is present on residues Ser11 and Ser13. The stretch at 104-157 (AADNEIVDWKANNSNEKAQNKIATNKESTDILPEEVQLVLNDLNDDVKSANSAN) forms a coiled coil. The disordered stretch occupies residues 262–381 (LNSQNEHTEV…DRSYRSTRTL (120 aa)). Over residues 274–285 (KSNSIDNLTPSS) the composition is skewed to polar residues. A phosphoserine mark is found at Ser275 and Ser277. Composition is skewed to basic and acidic residues over residues 287 to 297 (LFRKRSRDNNL), 306 to 332 (KHLDYNSRNYNKRDRDPDRTKYREYHS), and 362 to 375 (SDRYTERENPDRSY).

Belongs to the SPP2 family. As to quaternary structure, belongs to the 40S cdc5-associated complex (or cwf complex), a spliceosome sub-complex reminiscent of a late-stage spliceosome composed of the U2, U5 and U6 snRNAs and at least brr2, cdc5, cwf2/prp3, cwf3/syf1, cwf4/syf3, cwf5/ecm2, spp42/cwf6, cwf7/spf27, cwf8, cwf9, cwf10, cwf11, cwf12, prp45/cwf13, cwf14, cwf15, cwf16, cwf17, cwf18, cwf19, cwf20, cwf21, cwf22, cwf23, cwf24, cwf25, cwf26, cyp7/cwf27, cwf28, cwf29/ist3, lea1, msl1, prp5/cwf1, prp10, prp12/sap130, prp17, prp22, sap61, sap62, sap114, sap145, slu7, smb1, smd1, smd3, smf1, smg1 and syf2.

It localises to the nucleus. In terms of biological role, involved in spliceosome maturation and the first step of pre-mRNA splicing. The sequence is that of Pre-mRNA-splicing factor cwf28 (cwf28) from Schizosaccharomyces pombe (strain 972 / ATCC 24843) (Fission yeast).